The chain runs to 378 residues: Mating-type protein MAT-1 (378 aa).

The alpha box DNA-binding region spans 60 to 117 (KARKALNAFVGFRCYYITIPMFKPWPMKKLSNLIGLLWEADPNKSLWSLMAKPWSTIR).

The protein belongs to the MATALPHA1 family.

It is found in the nucleus. Functionally, mating type proteins are sequence specific DNA-binding proteins that act as master switches in fungal differentiation by controlling gene expression in a cell type-specific fashion. Transcriptional activator that induces the transcription of alpha-specific genes. In Cochliobolus sativus (Common root rot and spot blotch fungus), this protein is Mating-type protein MAT-1 (MAT1).